Reading from the N-terminus, the 486-residue chain is Monocarboxylate transporter 12 (486 aa).

Residues 1 to 9 (MTKITRVSL) are Cytoplasmic-facing. The next 12 membrane-spanning stretches (helical) occupy residues 10 to 30 (ASPP…LVTI), 58 to 78 (AWIH…GSVV), 86 to 106 (AGIM…SFAT), 115 to 135 (LGVL…AMVG), 148 to 168 (IAMS…QLLI), 177 to 197 (LLIL…MRPI), 253 to 273 (FVVL…LFVY), 289 to 309 (AFLM…FGWL), 320 to 340 (YVCY…LPML), 353 to 373 (FGYF…EIVG), 383 to 403 (VVYF…GWLV), and 410 to 430 (TAAF…LGFV). Residues 431-486 (RIVKRMKRTQVPFPVKDSDPKLQLWTNGSVAYSVARELDQKDEEPLPKARSGCNLT) lie on the Cytoplasmic side of the membrane.

The protein belongs to the major facilitator superfamily. Monocarboxylate porter (TC 2.A.1.13) family. Interacts with isoform 2 of BSG; this interaction is required for its localization to the plasma membrane. Highly expressed in the lung, liver, kidney, and pancreas. Expressed in eye lens.

It is found in the cell membrane. It localises to the basolateral cell membrane. The catalysed reaction is creatine(in) = creatine(out). It catalyses the reaction guanidinoacetate(in) = guanidinoacetate(out). Creatine uptake is inhibited by carbonyl cyanide 3-chlorophenylhydrazone (CCCP) and by valinomycin. In terms of biological role, functions as a transporter for creatine and as well for its precursor guanidinoacetate. Transport of creatine and GAA is independent of resting membrane potential and extracellular Na(+), Cl(-), or pH. Contributes to the process of creatine biosynthesis and distribution. The protein is Monocarboxylate transporter 12 of Mus musculus (Mouse).